Here is a 792-residue protein sequence, read N- to C-terminus: Probable phosphoketolase (792 aa).

Belongs to the XFP family. Thiamine diphosphate is required as a cofactor.

In Brucella melitensis biotype 1 (strain ATCC 23456 / CCUG 17765 / NCTC 10094 / 16M), this protein is Probable phosphoketolase.